A 132-amino-acid chain; its full sequence is Small ribosomal subunit protein uS8 (132 aa).

The protein belongs to the universal ribosomal protein uS8 family. In terms of assembly, part of the 30S ribosomal subunit. Contacts proteins S5 and S12.

Its function is as follows. One of the primary rRNA binding proteins, it binds directly to 16S rRNA central domain where it helps coordinate assembly of the platform of the 30S subunit. The chain is Small ribosomal subunit protein uS8 from Kineococcus radiotolerans (strain ATCC BAA-149 / DSM 14245 / SRS30216).